Reading from the N-terminus, the 570-residue chain is Sulfite reductase [NADPH] hemoprotein beta-component (570 aa).

Residues Cys434, Cys440, Cys479, and Cys483 each contribute to the [4Fe-4S] cluster site. A siroheme-binding site is contributed by Cys483.

This sequence belongs to the nitrite and sulfite reductase 4Fe-4S domain family. In terms of assembly, alpha(8)-beta(8). The alpha component is a flavoprotein, the beta component is a hemoprotein. Requires siroheme as cofactor. The cofactor is [4Fe-4S] cluster.

The catalysed reaction is hydrogen sulfide + 3 NADP(+) + 3 H2O = sulfite + 3 NADPH + 4 H(+). Its pathway is sulfur metabolism; hydrogen sulfide biosynthesis; hydrogen sulfide from sulfite (NADPH route): step 1/1. Functionally, component of the sulfite reductase complex that catalyzes the 6-electron reduction of sulfite to sulfide. This is one of several activities required for the biosynthesis of L-cysteine from sulfate. This Shigella sonnei (strain Ss046) protein is Sulfite reductase [NADPH] hemoprotein beta-component.